Here is a 506-residue protein sequence, read N- to C-terminus: Maturase K (506 aa).

Belongs to the intron maturase 2 family. MatK subfamily.

The protein resides in the plastid. Its subcellular location is the chloroplast. Usually encoded in the trnK tRNA gene intron. Probably assists in splicing its own and other chloroplast group II introns. The protein is Maturase K of Rhododendron tsusiophyllum (Rhododendron).